The primary structure comprises 480 residues: Chromosomal replication initiator protein DnaA (480 aa).

The segment at 1 to 73 (MNQDFWPFCL…GELGEEFHGQ (73 aa)) is domain I, interacts with DnaA modulators. The domain II stretch occupies residues 73 to 143 (QPIQLELQLP…SANELAYDKT (71 aa)). The interval 144 to 360 (RLNADFTFDT…GALNKVVAYA (217 aa)) is domain III, AAA+ region. Positions 188, 190, 191, and 192 each coordinate ATP. The tract at residues 361-480 (RFHGRGISLE…VHVLTQVLRG (120 aa)) is domain IV, binds dsDNA.

Belongs to the DnaA family. Oligomerizes as a right-handed, spiral filament on DNA at oriC.

It localises to the cytoplasm. In terms of biological role, plays an essential role in the initiation and regulation of chromosomal replication. ATP-DnaA binds to the origin of replication (oriC) to initiate formation of the DNA replication initiation complex once per cell cycle. Binds the DnaA box (a 9 base pair repeat at the origin) and separates the double-stranded (ds)DNA. Forms a right-handed helical filament on oriC DNA; dsDNA binds to the exterior of the filament while single-stranded (ss)DNA is stabiized in the filament's interior. The ATP-DnaA-oriC complex binds and stabilizes one strand of the AT-rich DNA unwinding element (DUE), permitting loading of DNA polymerase. After initiation quickly degrades to an ADP-DnaA complex that is not apt for DNA replication. Binds acidic phospholipids. The polypeptide is Chromosomal replication initiator protein DnaA (Azoarcus sp. (strain BH72)).